Consider the following 83-residue polypeptide: DNA-directed RNA polymerase subunit Rpo5 (83 aa).

This sequence belongs to the archaeal Rpo5/eukaryotic RPB5 RNA polymerase subunit family. Part of the RNA polymerase complex.

The protein localises to the cytoplasm. It carries out the reaction RNA(n) + a ribonucleoside 5'-triphosphate = RNA(n+1) + diphosphate. DNA-dependent RNA polymerase (RNAP) catalyzes the transcription of DNA into RNA using the four ribonucleoside triphosphates as substrates. This is DNA-directed RNA polymerase subunit Rpo5 from Nitrosopumilus maritimus (strain SCM1).